The sequence spans 128 residues: Large ribosomal subunit protein bL20 (128 aa).

Belongs to the bacterial ribosomal protein bL20 family.

Its function is as follows. Binds directly to 23S ribosomal RNA and is necessary for the in vitro assembly process of the 50S ribosomal subunit. It is not involved in the protein synthesizing functions of that subunit. The polypeptide is Large ribosomal subunit protein bL20 (Anaplasma phagocytophilum (strain HZ)).